The sequence spans 93 residues: MTDALGSIDMPDAEDETREKKARKGGKRGKKGPLGRLALFYRQIVAELRKVVWPTRNQLTTYTTVVIVFVVIMIGLVTVIDFGFEKAIKFVFG.

A disordered region spans residues 1–33 (MTDALGSIDMPDAEDETREKKARKGGKRGKKGP). Residues 20–33 (KKARKGGKRGKKGP) are compositionally biased toward basic residues. Residues 64 to 84 (TVVIVFVVIMIGLVTVIDFGF) form a helical membrane-spanning segment.

It belongs to the SecE/SEC61-gamma family. In terms of assembly, component of the Sec protein translocase complex. Heterotrimer consisting of SecY, SecE and SecG subunits. The heterotrimers can form oligomers, although 1 heterotrimer is thought to be able to translocate proteins. Interacts with the ribosome. Interacts with SecDF, and other proteins may be involved. Interacts with SecA.

The protein localises to the cell membrane. In terms of biological role, essential subunit of the Sec protein translocation channel SecYEG. Clamps together the 2 halves of SecY. May contact the channel plug during translocation. This chain is Protein translocase subunit SecE, found in Streptomyces virginiae (Streptomyces cinnamonensis).